The following is a 373-amino-acid chain: SWI/SNF-related matrix-associated actin-dependent regulator of chromatin subfamily B member 1-A (373 aa).

Residues 1-101 form a DNA-binding region; that stretch reads MALSKTYGQK…DEKYKAVSIS (101 aa).

This sequence belongs to the SNF5 family. As to quaternary structure, component of the multiprotein chromatin-remodeling complexes SWI/SNF. Component of neural progenitors-specific chromatin remodeling complex (npBAF complex) and the neuron-specific chromatin remodeling complex (nBAF complex). Component of the BAF (SWI/SNF) chromatin remodeling complex. Component of the SWI/SNF-B (PBAF) chromatin remodeling complex. Binds to double-stranded DNA.

Its subcellular location is the nucleus. Functionally, involved in chromatin-remodeling. Core component of the BAF (SWI/SNF) complex. This ATP-dependent chromatin-remodeling complex plays important roles in cell proliferation and differentiation, in cellular antiviral activities and inhibition of tumor formation. Belongs to the neural progenitors-specific chromatin remodeling complex (npBAF complex) and the neuron-specific chromatin remodeling complex (nBAF complex) and may play a role in neural development. The polypeptide is SWI/SNF-related matrix-associated actin-dependent regulator of chromatin subfamily B member 1-A (smarcb1a) (Danio rerio (Zebrafish)).